The chain runs to 98 residues: uncharacterized protein (98 aa).

Helical transmembrane passes span 14–34 and 41–61; these read FLVI…PVTA and MTGA…ASII.

The protein resides in the cell membrane. This is an uncharacterized protein from Haemophilus influenzae (strain ATCC 51907 / DSM 11121 / KW20 / Rd).